A 415-amino-acid chain; its full sequence is F-box/kelch-repeat protein At2g29600 (415 aa).

Residues methionine 1–proline 58 form a disordered region. Residues glutamine 19 to aspartate 45 show a composition bias toward basic and acidic residues. The 48-residue stretch at glutamine 56–leucine 103 folds into the F-box domain. Kelch repeat units follow at residues lysine 161 to glycine 208, isoleucine 210 to histidine 254, lysine 260 to proline 309, and histidine 311 to isoleucine 355.

This is F-box/kelch-repeat protein At2g29600 from Arabidopsis thaliana (Mouse-ear cress).